The sequence spans 174 residues: Protein C (174 aa).

This sequence belongs to the morbillivirus protein C family.

In Phocine distemper virus (PDV), this protein is Protein C (P/V/C).